The primary structure comprises 875 residues: Serine/threonine-protein kinase ATG1 (875 aa).

Residues 22-318 enclose the Protein kinase domain; that stretch reads YSIGPEIGKG…FNEFFNDPLI (297 aa). ATP is bound by residues 28-36 and Lys51; that span reads IGKGSFATV. Asp168 acts as the Proton acceptor in catalysis. The span at 367–379 shows a compositional bias: basic and acidic residues; the sequence is EKSKQDLPAREVS. 2 disordered regions span residues 367 to 422 and 470 to 515; these read EKSK…QPHN and INPR…DRRI. Polar residues predominate over residues 380-389; that stretch reads THASESQTKA. Positions 390 to 405 are enriched in basic and acidic residues; the sequence is VDTRPSSRDEEIKEII. Polar residues-rich tracts occupy residues 406–420, 473–490, and 497–508; these read NKNSPGPETSRSIQP, RRTSSGSDNSYNGPNNMQ, and LRSNSSGSQRRP.

It belongs to the protein kinase superfamily. Ser/Thr protein kinase family. APG1/unc-51/ULK1 subfamily. Homodimer. Forms a ternary complex with ATG13 and ATG17.

The protein resides in the cytoplasm. Its subcellular location is the preautophagosomal structure membrane. The enzyme catalyses L-seryl-[protein] + ATP = O-phospho-L-seryl-[protein] + ADP + H(+). It catalyses the reaction L-threonyl-[protein] + ATP = O-phospho-L-threonyl-[protein] + ADP + H(+). Its function is as follows. Serine/threonine protein kinase involved in the cytoplasm to vacuole transport (Cvt) and found to be essential in autophagy, where it is required for the formation of autophagosomes. Involved in the clearance of protein aggregates which cannot be efficiently cleared by the proteasome. Required for selective autophagic degradation of the nucleus (nucleophagy) as well as for mitophagy which contributes to regulate mitochondrial quantity and quality by eliminating the mitochondria to a basal level to fulfill cellular energy requirements and preventing excess ROS production. Also involved in endoplasmic reticulum-specific autophagic process, in selective removal of ER-associated degradation (ERAD) substrates. Plays a key role in ATG9 and ATG23 cycling through the pre-autophagosomal structure and is necessary to promote ATG18 binding to ATG9 through phosphorylation of ATG9. Catalyzes phosphorylation of ATG4, decreasing the interaction between ATG4 and ATG8 and impairing deconjugation of PE-conjugated forms of ATG8. The chain is Serine/threonine-protein kinase ATG1 from Debaryomyces hansenii (strain ATCC 36239 / CBS 767 / BCRC 21394 / JCM 1990 / NBRC 0083 / IGC 2968) (Yeast).